Reading from the N-terminus, the 116-residue chain is Iron-sulfur cluster assembly protein CyaY (116 aa).

This sequence belongs to the frataxin family.

Involved in iron-sulfur (Fe-S) cluster assembly. May act as a regulator of Fe-S biogenesis. In Buchnera aphidicola subsp. Acyrthosiphon pisum (strain APS) (Acyrthosiphon pisum symbiotic bacterium), this protein is Iron-sulfur cluster assembly protein CyaY.